Here is a 427-residue protein sequence, read N- to C-terminus: Mucorpepsin (427 aa).

An N-terminal signal peptide occupies residues methionine 1–alanine 22. Residues arginine 23 to phenylalanine 66 constitute a propeptide, activation peptide. In terms of domain architecture, Peptidase A1 spans tyrosine 86–alanine 418. The active site involves aspartate 104. Cysteines 117 and 123 form a disulfide. Asparagine 254 carries N-linked (GlcNAc...) asparagine glycosylation. Residue aspartate 303 is part of the active site. Cysteine 338 and cysteine 382 form a disulfide bridge.

This sequence belongs to the peptidase A1 family.

The catalysed reaction is Hydrolysis of proteins, favoring hydrophobic residues at P1 and P1'. Clots milk. Does not accept Lys at P1, and hence does not activate trypsinogen.. In terms of biological role, this enzyme, capable of clotting milk is frequently used for cheese production. In Rhizomucor pusillus, this protein is Mucorpepsin.